A 181-amino-acid polypeptide reads, in one-letter code: Malignant T-cell-amplified sequence 2 (181 aa).

Residues 92-171 (LPHQQVDKGA…IGIENIHYLN (80 aa)) form the PUA domain.

It belongs to the MCTS1 family.

It is found in the cytoplasm. The sequence is that of Malignant T-cell-amplified sequence 2 from Homo sapiens (Human).